The sequence spans 94 residues: Putative septation protein SpoVG (94 aa).

Belongs to the SpoVG family.

In terms of biological role, could be involved in septation. In Acetivibrio thermocellus (strain ATCC 27405 / DSM 1237 / JCM 9322 / NBRC 103400 / NCIMB 10682 / NRRL B-4536 / VPI 7372) (Clostridium thermocellum), this protein is Putative septation protein SpoVG.